The sequence spans 106 residues: UPF0145 protein VC_A0951 (106 aa).

This sequence belongs to the UPF0145 family.

This chain is UPF0145 protein VC_A0951, found in Vibrio cholerae serotype O1 (strain ATCC 39315 / El Tor Inaba N16961).